The primary structure comprises 109 residues: Flagellar hook-basal body complex protein FliE (109 aa).

It belongs to the FliE family.

It localises to the bacterial flagellum basal body. This is Flagellar hook-basal body complex protein FliE from Pseudomonas fluorescens (strain SBW25).